The sequence spans 413 residues: Transforming growth factor beta-2 proprotein (413 aa).

The signal sequence occupies residues 1–19 (MHYYVLFTFLTLDLAPVAL). N72, N140, and N241 each carry an N-linked (GlcNAc...) asparagine glycan. Intrachain disulfides connect C308–C317, C316–C379, C345–C410, and C349–C412.

This sequence belongs to the TGF-beta family. As to quaternary structure, interacts with Transforming growth factor beta-2 (TGF-beta-2) chain; interaction is non-covalent and maintains (TGF-beta-2) in a latent state. Homodimer; disulfide-linked. Interacts with TGF-beta receptors (tgfbr1 and tgfbr2), leading to signal transduction. The precursor proprotein is cleaved in the Golgi apparatus to form Transforming growth factor beta-2 (TGF-beta-2) and Latency-associated peptide (LAP) chains, which remain non-covalently linked, rendering TGF-beta-2 inactive.

It localises to the secreted. The protein resides in the extracellular space. It is found in the extracellular matrix. Functionally, precursor of the Latency-associated peptide (LAP) and Transforming growth factor beta-2 (TGF-beta-2) chains, which constitute the regulatory and active subunit of TGF-beta-2, respectively. In terms of biological role, required to maintain the Transforming growth factor beta-2 (TGF-beta-2) chain in a latent state during storage in extracellular matrix. Associates non-covalently with TGF-beta-2 and regulates its activation via interaction with 'milieu molecules', such as ltbp1 and lrrc32/garp, that control activation of TGF-beta-2. Its function is as follows. Multifunctional protein that regulates various processes such as angiogenesis and heart development. Activation into mature form follows different steps: following cleavage of the proprotein in the Golgi apparatus, Latency-associated peptide (LAP) and Transforming growth factor beta-2 (TGF-beta-2) chains remain non-covalently linked rendering TGF-beta-2 inactive during storage in extracellular matrix. At the same time, LAP chain interacts with 'milieu molecules', such as ltbp1 and lrrc32/garp, that control activation of TGF-beta-2 and maintain it in a latent state during storage in extracellular milieus. Once activated following release of LAP, TGF-beta-2 acts by binding to TGF-beta receptors (tgfbr1 and tgfbr2), which transduce signal. The sequence is that of Transforming growth factor beta-2 proprotein (tgfb2) from Xenopus laevis (African clawed frog).